The primary structure comprises 1233 residues: Integrator complex subunit 4 homolog (1233 aa).

HEAT repeat units lie at residues 236 to 273 (SLINQIIEYIEPLLHSTSPLVRRETIVLLGSIVKNLDK) and 275 to 310 (SEEIQILLLNYLKDTDFRVREASLKSLSVIFQRGAS). A disordered region spans residues 426-473 (RLQQKQQQQQQQQQQQQQQPPQQQPSQQPNQQPNQQQTNVSGTHIATP). The segment covering 428–462 (QQKQQQQQQQQQQQQQQPPQQQPSQQPNQQPNQQQ) has biased composition (low complexity). HEAT repeat units follow at residues 487-524 (ILESGVIGAFIQGLEDEFYEVRSSAIDSMCELSVRNDE), 525-561 (FAQKNIDFLVDIFNDEIESVRINSINSLRKIGNNVVI), and 563-597 (EEQLHIILANLESSSKEERQSLHRLLTSIHLSNYS). The span at 767 to 792 (NNNTNNNNNNNNNNNNNNNNNNNNNN) shows a compositional bias: low complexity. Disordered regions lie at residues 767 to 796 (NNNTNNNNNNNNNNNNNNNNNNNNNNDEND) and 993 to 1057 (DKKL…TTTT). Over residues 1000-1013 (EENEENEENENNEN) the composition is skewed to acidic residues. Over residues 1014–1030 (ENEKENGKNKEKEKNEN) the composition is skewed to basic and acidic residues. A compositionally biased stretch (low complexity) spans 1046–1057 (KTTSELIKTTTT).

The protein belongs to the Integrator subunit 4 family. In terms of assembly, component of the Integrator complex. The core complex associates with protein phosphatase 2A subunits, to form the Integrator-PP2A (INTAC) complex.

It is found in the nucleus. The protein resides in the cytoplasm. Functionally, component of the integrator complex, a multiprotein complex that terminates RNA polymerase II (Pol II) transcription in the promoter-proximal region of genes. The integrator complex provides a quality checkpoint during transcription elongation by driving premature transcription termination of transcripts that are unfavorably configured for transcriptional elongation: the complex terminates transcription by (1) catalyzing dephosphorylation of the C-terminal domain (CTD) of Pol II subunit polr2a, (2) degrading the exiting nascent RNA transcript via endonuclease activity and (3) promoting the release of Pol II from bound DNA. The integrator complex is also involved in terminating the synthesis of non-coding Pol II transcripts, such as enhancer RNAs (eRNAs), small nuclear RNAs (snRNAs), telomerase RNAs and long non-coding RNAs (lncRNAs). The sequence is that of Integrator complex subunit 4 homolog (ints4) from Dictyostelium discoideum (Social amoeba).